Here is a 1888-residue protein sequence, read N- to C-terminus: E3 ubiquitin-protein ligase UPL3 (1888 aa).

Positions 1–10 (METRSRKRAE) are enriched in basic and acidic residues. The interval 1 to 157 (METRSRKRAE…NGGFMHPNMS (157 aa)) is disordered. Positions 41–81 (LSSSSSSSLAPTPPSSSTTTRSRSSRSAAAAAPMDTSTDSS) are enriched in low complexity. Residues 97-124 (NSDKGKEKEHDVRIRERERERDRAREQL) are compositionally biased toward basic and acidic residues. Residues 137–146 (DEDDDNDSED) show a composition bias toward acidic residues. ARM repeat units follow at residues 227-267 (EDSL…HLCD), 270-310 (PSSC…KISQ), 312-349 (HPTA…NMCK), and 351-390 (LPSD…RIAE). 4 disordered regions span residues 660–711 (KPSH…IGAN), 970–1119 (ALKP…LPMC), 1134–1157 (DDDG…GAAA), and 1280–1307 (RLSV…VESQ). Residues 986 to 1002 (PSGAGVSSPSSSTPAST) are compositionally biased toward low complexity. Positions 1019–1029 (TSKKDPVHEKG) are enriched in basic and acidic residues. The span at 1076–1113 (SSEDEELEISPVDIDDALVIEEDDISDDEDDDNEDVLD) shows a compositional bias: acidic residues. Composition is skewed to low complexity over residues 1148–1157 (ASGGTSGAAA) and 1286–1303 (ASST…TNSS). Residues 1377–1451 (AKVPLDEFVN…ALNRLQQQQG (75 aa)) form a K-box region. The HECT domain maps to 1490–1888 (MYSSQKAVLE…NEGQGSFDLS (399 aa)). Cys1855 acts as the Glycyl thioester intermediate in catalysis.

The protein belongs to the UPL family. K-HECT subfamily. Widely expressed.

The catalysed reaction is S-ubiquitinyl-[E2 ubiquitin-conjugating enzyme]-L-cysteine + [acceptor protein]-L-lysine = [E2 ubiquitin-conjugating enzyme]-L-cysteine + N(6)-ubiquitinyl-[acceptor protein]-L-lysine.. The protein operates within protein modification; protein ubiquitination. Its function is as follows. Probable E3 ubiquitin-protein ligase which mediates ubiquitination and subsequent proteasomal degradation of target proteins. Involved in the repression of endoreduplication process and the cell morphogenesis in the trichomes. The chain is E3 ubiquitin-protein ligase UPL3 (UPL3) from Arabidopsis thaliana (Mouse-ear cress).